The primary structure comprises 196 residues: NADPH:quinone oxidoreductase (196 aa).

It belongs to the SsuE family. In terms of assembly, homotetramer. The cofactor is FMN.

The protein localises to the cell membrane. It catalyses the reaction a quinone + NADH + H(+) = a quinol + NAD(+). The catalysed reaction is a quinone + NADPH + H(+) = a quinol + NADP(+). In terms of biological role, the enzyme apparently serves as a quinone reductase in connection with conjugation reactions of hydroquinones involved in detoxification pathways. This Arabidopsis thaliana (Mouse-ear cress) protein is NADPH:quinone oxidoreductase (NQR).